The chain runs to 281 residues: Oxidase pynE (281 aa).

It belongs to the avfA family.

The protein operates within secondary metabolite biosynthesis. Its function is as follows. Oxidase; part of the gene cluster that mediates the biosynthesis of pyranonigrins, a family of antioxidative compounds. The first step of pyranonigrins biosynthesis is performed by the hybrid PKS-NRPS synthetase that condenses 6 malonyl-CoA units to an acetyl starter unit, to form a 1,3,5-trioxotetradecane-6,8-dienyl-ACP. The enoyl reductase (ER) domain of pynA is likely to be functional during the first two rounds of polyketide chain extension, to generate the saturated C-C bonds of the alkyl side chain. PynA subsequently forms the amide bond between the acyl chain and L-serine. Although pynA has a terminal reductase domain, it appears to require the thioesterase pynI for the release of the straight-chain intermediate from pynA via the formation of a tetramic acid pyranonigrin J. The methyltransferase pynC then coverts pyranonigrin J to pyranonigrin I via N-methylation. The FAD-dependent monooxygenase pynG catalyzes an epoxidation-mediated cyclization to form the dihydro-gamma-pyrone moiety, followed by pynD-catalyzed oxidation of the alcohol to the ketone and enolization to yield the characteristic tetramic acid-fused gamma-pyrone core of pyranonigrin H. Pyranonigrin H is substrate of pynH for dehydration-mediated exo-methylene formation from the serine side chain to produce pyranonigrin E, before the oxidase pynE reduces the exo-methylene of pyranonigrin E into a pendant methyl to form pyranonigrin G. The FAD-linked oxidoreductase pynB performs the reverse reaction and converts pyranonigrin G back to pyranonigrin E. This is Oxidase pynE from Aspergillus niger (strain ATCC MYA-4892 / CBS 513.88 / FGSC A1513).